A 430-amino-acid chain; its full sequence is mRNA cap guanine-N(7) methyltransferase (430 aa).

Residues 1–88 are disordered; it reads MALRPEKPVW…YDLEERKKKQ (88 aa). Residues 15–37 show a composition bias toward basic and acidic residues; that stretch reads QYDRQYGKLEEPKPPREESKPGD. The mRNA cap 0 methyltransferase domain maps to 136 to 419; it reads SPIIKLRNFN…FYTVFAFRKV (284 aa). 145–146 serves as a coordination point for mRNA; it reads NN. S-adenosyl-L-methionine is bound by residues Lys149, Gly167, Asp189, Asp218, Gln244, and Tyr249.

Belongs to the class I-like SAM-binding methyltransferase superfamily. mRNA cap 0 methyltransferase family.

Its subcellular location is the nucleus. The enzyme catalyses a 5'-end (5'-triphosphoguanosine)-ribonucleoside in mRNA + S-adenosyl-L-methionine = a 5'-end (N(7)-methyl 5'-triphosphoguanosine)-ribonucleoside in mRNA + S-adenosyl-L-homocysteine. Responsible for methylating the 5'-cap structure of mRNAs. In Eremothecium gossypii (strain ATCC 10895 / CBS 109.51 / FGSC 9923 / NRRL Y-1056) (Yeast), this protein is mRNA cap guanine-N(7) methyltransferase (ABD1).